Reading from the N-terminus, the 110-residue chain is Insulin (110 aa).

The N-terminal stretch at 1–24 (MALWMRLLPLLALLALWGPDPAQA) is a signal peptide. 3 disulfides stabilise this stretch: C31/C96, C43/C109, and C95/C100. Residues 57–87 (EAEDLQVGQVELGGGPGAGSLQPLALEGSLQ) constitute a propeptide, c peptide.

Belongs to the insulin family. In terms of assembly, heterodimer of a B chain and an A chain linked by two disulfide bonds.

The protein localises to the secreted. In terms of biological role, insulin decreases blood glucose concentration. It increases cell permeability to monosaccharides, amino acids and fatty acids. It accelerates glycolysis, the pentose phosphate cycle, and glycogen synthesis in liver. In Pongo pygmaeus (Bornean orangutan), this protein is Insulin (INS).